The following is a 69-amino-acid chain: Metallothionein-like protein 3 (69 aa).

The protein belongs to the metallothionein superfamily. Type 15 family. Expressed in leaf mesophyll cells, root tips, and at low levels in anthers.

Metallothioneins have a high content of cysteine residues that bind various heavy metals. Functions as a metal chelator of copper (Cu) and zinc (Zn). Plays a role in Cu homeostasis, specifically in the remobilization of Cu from senescing leaves. The mobilization of Cu from internal sources is important for seed development. In Arabidopsis thaliana (Mouse-ear cress), this protein is Metallothionein-like protein 3.